Consider the following 221-residue polypeptide: Nuclear phosphoprotein UL3 homolog (221 aa).

Belongs to the alphaherpesvirinae HHV-1 UL3 family. Post-translationally, phosphorylated.

The protein resides in the host nucleus. The sequence is that of Nuclear phosphoprotein UL3 homolog from Varicella-zoster virus (strain Oka vaccine) (HHV-3).